Consider the following 153-residue polypeptide: MKIILLDNIDKLGNKGSEVVVRSGYARNFLIPKSKAMLATKKNIEIFKAQQLELQSKAIEAQTQAEFCAKTINRLGSITIKAKSGVEGKLFGSIGSRDIATAITAASGFNISKSQIRLPNHDVLRTIGTYSINIHIYNDIFSKINVIILDEIV.

The protein belongs to the bacterial ribosomal protein bL9 family.

In terms of biological role, binds to the 23S rRNA. This Blochmanniella pennsylvanica (strain BPEN) protein is Large ribosomal subunit protein bL9.